The sequence spans 233 residues: Lysine exporter LysE (233 aa).

Topologically, residues 1–2 (ME) are cytoplasmic. Residues 3-23 (IFITGLLLGASLLLSIGPQNV) traverse the membrane as a helical segment. The Periplasmic portion of the chain corresponds to 24-65 (LVIKQGIKREGLIAVLLVCLISDVFLFIAGTLGVDLLSNAAP). A helical transmembrane segment spans residues 66–86 (IVLDIMRWGGIAYLLWFAVMA). At 87-143 (AKDAMTNKVEAPQIIEETEPTVPDDTPLGGSAVATDTRNRVRVEVSVDKQRVWVKPM) the chain is on the cytoplasmic side. Residues 144–164 (LMAIVLTWLNPNAYLDAFVFI) traverse the membrane as a helical segment. At 165–176 (GGVGAQYGDTGR) the chain is on the periplasmic side. A helical transmembrane segment spans residues 177-197 (WIFAAGAFAASLIWFPLVGFG). The Cytoplasmic segment spans residues 198-212 (AAALSRPLSSPKVWR). The helical transmembrane segment at 213–233 (WINVVVAVVMTALAIKLMLMG) threads the bilayer.

This sequence belongs to the LysE/ArgO transporter (TC 2.A.75) family.

The protein localises to the cell inner membrane. Its activity is regulated as follows. Transport process is modulated by three forces: the membrane potential, the chemical potential of lysine, and the proton gradient. Strongly inhibited by CCCP and valinomycin. Its function is as follows. Catalyzes the efflux of L-lysine. Can also export L-arginine and L-citrulline. The lysEG system prevents bacteriostasis due to elevated L-lysine or L-arginine concentrations that arise during growth in the presence of peptides or in mutants possessing a deregulated biosynthesis pathway. In vitro, can also export D-lysine during biotechnological production of D-amino acids. This chain is Lysine exporter LysE, found in Corynebacterium glutamicum (strain ATCC 13032 / DSM 20300 / JCM 1318 / BCRC 11384 / CCUG 27702 / LMG 3730 / NBRC 12168 / NCIMB 10025 / NRRL B-2784 / 534).